A 507-amino-acid polypeptide reads, in one-letter code: Kunitz-type protease inhibitor 1 (507 aa).

The first 29 residues, 1-29 (MAGRRLARASISAVGVWLLCALGLQATEA), serve as a signal peptide directing secretion. Positions 51 to 134 (GVPSFVLDTE…FAPKEGFINY (84 aa)) constitute an MANSC domain. Asparagine 229 carries N-linked (GlcNAc...) asparagine glycosylation. In terms of domain architecture, BPTI/Kunitz inhibitor 1 spans 244–294 (CLASYKVGRCRGSFPRWYYDPKEQICKSFTFGGCLGNKNNYLREEECMLAC). Intrachain disulfides connect cysteine 244/cysteine 294, cysteine 253/cysteine 277, cysteine 269/cysteine 290, cysteine 320/cysteine 338, cysteine 332/cysteine 347, cysteine 369/cysteine 419, cysteine 378/cysteine 402, and cysteine 394/cysteine 415. In terms of domain architecture, LDL-receptor class A spans 312–348 (SCHATQFRCSNGCCIDGFLECDDTPDCPDGSDEATCE). The BPTI/Kunitz inhibitor 2 domain maps to 369–419 (CAELPDTGFCKENIPRWYYNPFSERCARFTYGGCYGNKNNFEEEQQCLESC). Asparagine 501 carries an N-linked (GlcNAc...) asparagine glycan.

As to quaternary structure, interacts with HGFAC. Interacts with TMPRSS13; the interaction promotes the phosphorylation and cell membrane localization of TMPRSS13.

Its subcellular location is the secreted. The protein localises to the cytoplasm. It localises to the cell membrane. Its function is as follows. Inhibitor of HGFAC. Inhibits serine protease activity of ST14/matriptase in vitro. Inhibits serine protease activity of TMPRSS13, via the BPTI/Kunitz inhibitor 1 domain. The sequence is that of Kunitz-type protease inhibitor 1 (Spint1) from Mus musculus (Mouse).